A 279-amino-acid polypeptide reads, in one-letter code: S-methyl-5'-thioadenosine phosphorylase (279 aa).

Phosphate-binding positions include serine 28, 70-71 (RH), and 103-104 (SA). A substrate-binding site is contributed by methionine 202. Residue threonine 203 participates in phosphate binding. Position 226 to 228 (226 to 228 (DYD)) interacts with substrate.

It belongs to the PNP/MTAP phosphorylase family. MTAP subfamily. Homohexamer. Dimer of a homotrimer.

It catalyses the reaction S-methyl-5'-thioadenosine + phosphate = 5-(methylsulfanyl)-alpha-D-ribose 1-phosphate + adenine. It participates in amino-acid biosynthesis; L-methionine biosynthesis via salvage pathway; S-methyl-5-thio-alpha-D-ribose 1-phosphate from S-methyl-5'-thioadenosine (phosphorylase route): step 1/1. Catalyzes the reversible phosphorylation of S-methyl-5'-thioadenosine (MTA) to adenine and 5-methylthioribose-1-phosphate. Involved in the breakdown of MTA, a major by-product of polyamine biosynthesis. Responsible for the first step in the methionine salvage pathway after MTA has been generated from S-adenosylmethionine. Has broad substrate specificity with 6-aminopurine nucleosides as preferred substrates. The protein is S-methyl-5'-thioadenosine phosphorylase of Pyrobaculum aerophilum (strain ATCC 51768 / DSM 7523 / JCM 9630 / CIP 104966 / NBRC 100827 / IM2).